The primary structure comprises 87 residues: Phosphoribosyl-ATP pyrophosphatase (87 aa).

This sequence belongs to the PRA-PH family.

It localises to the cytoplasm. It catalyses the reaction 1-(5-phospho-beta-D-ribosyl)-ATP + H2O = 1-(5-phospho-beta-D-ribosyl)-5'-AMP + diphosphate + H(+). It participates in amino-acid biosynthesis; L-histidine biosynthesis; L-histidine from 5-phospho-alpha-D-ribose 1-diphosphate: step 2/9. The polypeptide is Phosphoribosyl-ATP pyrophosphatase (Pseudarthrobacter chlorophenolicus (strain ATCC 700700 / DSM 12829 / CIP 107037 / JCM 12360 / KCTC 9906 / NCIMB 13794 / A6) (Arthrobacter chlorophenolicus)).